The sequence spans 457 residues: tRNA modification GTPase MnmE (457 aa).

(6S)-5-formyl-5,6,7,8-tetrahydrofolate is bound by residues Arg-23, Glu-85, and Arg-124. In terms of domain architecture, TrmE-type G spans 220-376 (GALVVLAGQV…LVTAIRAAVL (157 aa)). Asn-230 is a binding site for K(+). GTP is bound by residues 230–235 (NAGKSS), 249–255 (TDLPGTT), and 274–277 (DTAG). Residue Ser-234 coordinates Mg(2+). K(+) contacts are provided by Thr-249, Leu-251, and Thr-254. Position 255 (Thr-255) interacts with Mg(2+). Lys-457 provides a ligand contact to (6S)-5-formyl-5,6,7,8-tetrahydrofolate.

The protein belongs to the TRAFAC class TrmE-Era-EngA-EngB-Septin-like GTPase superfamily. TrmE GTPase family. Homodimer. Heterotetramer of two MnmE and two MnmG subunits. K(+) is required as a cofactor.

It localises to the cytoplasm. Exhibits a very high intrinsic GTPase hydrolysis rate. Involved in the addition of a carboxymethylaminomethyl (cmnm) group at the wobble position (U34) of certain tRNAs, forming tRNA-cmnm(5)s(2)U34. This Nitratidesulfovibrio vulgaris (strain ATCC 29579 / DSM 644 / CCUG 34227 / NCIMB 8303 / VKM B-1760 / Hildenborough) (Desulfovibrio vulgaris) protein is tRNA modification GTPase MnmE.